Here is a 156-residue protein sequence, read N- to C-terminus: Probable cyclic pyranopterin monophosphate synthase (156 aa).

Residues 74 to 76 and 110 to 111 contribute to the substrate site; these read LCH and ME. The active site involves aspartate 125.

It belongs to the MoaC family. Homohexamer; trimer of dimers.

The catalysed reaction is (8S)-3',8-cyclo-7,8-dihydroguanosine 5'-triphosphate = cyclic pyranopterin phosphate + diphosphate. It functions in the pathway cofactor biosynthesis; molybdopterin biosynthesis. Catalyzes the conversion of (8S)-3',8-cyclo-7,8-dihydroguanosine 5'-triphosphate to cyclic pyranopterin monophosphate (cPMP). The protein is Probable cyclic pyranopterin monophosphate synthase of Thermococcus kodakarensis (strain ATCC BAA-918 / JCM 12380 / KOD1) (Pyrococcus kodakaraensis (strain KOD1)).